We begin with the raw amino-acid sequence, 1719 residues long: Serine/threonine-protein kinase MRCK alpha (1719 aa).

Residues 77 to 343 (FEILKVIGRG…IEDFKKHPFF (267 aa)) form the Protein kinase domain. Residues 83-91 (IGRGAFGEV) and Lys-106 each bind ATP. The active-site Proton acceptor is the Asp-201. A phosphoserine; by autocatalysis mark is found at Ser-222 and Ser-234. The residue at position 240 (Thr-240) is a Phosphothreonine; by autocatalysis. Positions 344 to 414 (SGIDWDNIRN…TSSCVLSDRS (71 aa)) constitute an AGC-kinase C-terminal domain. 3 coiled-coil regions span residues 437-670 (NNLA…KQKQ), 713-820 (SEIK…WEAQ), and 880-943 (LELQ…SEKG). The Phorbol-ester/DAG-type zinc-finger motif lies at 999 to 1049 (THQFFVKSFTAPTKCHQCTSLMVGLIRQGCSCEVCGFSCHITCVNKAPTVC). The region spanning 1069–1188 (GTAYEGHVRI…WVGVLSELHK (120 aa)) is the PH domain. A CNH domain is found at 1214 to 1486 (IKTTQAAAII…RPLNTEGSLN (273 aa)). Position 1532 is a phosphoserine (Ser-1532). A CRIB domain is found at 1558 to 1571 (ISNPTNFNHIAHMG). A disordered region spans residues 1579–1719 (LKDLPMNPRP…ESTDRGSWDP (141 aa)). A compositionally biased stretch (polar residues) spans 1591–1606 (SRTVFSGSVSIPSITK). Phosphoserine is present on residues Ser-1598, Ser-1600, Ser-1616, Ser-1638, Ser-1651, Ser-1656, Ser-1680, Ser-1706, and Ser-1708. Residues 1612–1627 (GRSMSASSGLSARSSA) show a composition bias toward low complexity. A compositionally biased stretch (low complexity) spans 1652–1661 (PSEGSLSSGG).

The protein belongs to the protein kinase superfamily. AGC Ser/Thr protein kinase family. DMPK subfamily. As to quaternary structure, homodimer and homotetramer via the coiled coil regions. Interacts tightly with GTP-bound but not GDP-bound CDC42. Forms a tripartite complex with MYO18A and LRP35A with the latter acting as an adapter connecting CDC42BPA and MYO18A. LRP35A binding results in activation of CDC42BPA by abolition of its negative autoregulation. Interacts with LURAP1. Interacts (via AGC-kinase C-terminal domain) with FAM89B/LRAP25 (via LRR repeat). Forms a tripartite complex with FAM89B/LRAP25 and LIMK1. Mg(2+) is required as a cofactor. Proteolytically cleaved by caspases upon apoptosis induction. The cleavage at Asp-478 by CASP3 increases its kinase activity (in vitro).

The protein resides in the cytoplasm. Its subcellular location is the cell projection. The protein localises to the lamellipodium. It catalyses the reaction L-seryl-[protein] + ATP = O-phospho-L-seryl-[protein] + ADP + H(+). It carries out the reaction L-threonyl-[protein] + ATP = O-phospho-L-threonyl-[protein] + ADP + H(+). Maintained in an inactive, closed conformation by an interaction between the kinase domain and the negative autoregulatory C-terminal coiled-coil region. Agonist binding to the phorbol ester binding site disrupts this, releasing the kinase domain to allow N-terminus-mediated dimerization and kinase activation by transautophosphorylation. Inhibited by chelerythrine chloride. Functionally, serine/threonine-protein kinase which is an important downstream effector of CDC42 and plays a role in the regulation of cytoskeleton reorganization and cell migration. Regulates actin cytoskeletal reorganization via phosphorylation of PPP1R12C and MYL9/MLC2. In concert with MYO18A and LRP35A, is involved in modulating lamellar actomyosin retrograde flow that is crucial to cell protrusion and migration. Phosphorylates: PPP1R12A and LIMK2. May play a role in TFRC-mediated iron uptake. In concert with FAM89B/LRAP25 mediates the targeting of LIMK1 to the lamellipodium resulting in its activation and subsequent phosphorylation of CFL1 which is important for lamellipodial F-actin regulation. Triggers the formation of an extrusion apical actin ring required for epithelial extrusion of apoptotic cells. The protein is Serine/threonine-protein kinase MRCK alpha (Cdc42bpa) of Mus musculus (Mouse).